Here is a 138-residue protein sequence, read N- to C-terminus: Large ribosomal subunit protein bL17 (138 aa).

The protein belongs to the bacterial ribosomal protein bL17 family. In terms of assembly, part of the 50S ribosomal subunit. Contacts protein L32.

In Jannaschia sp. (strain CCS1), this protein is Large ribosomal subunit protein bL17.